The following is a 275-amino-acid chain: Phosphonoacetaldehyde hydrolase (275 aa).

The Nucleophile role is filled by aspartate 15. Residues aspartate 15 and alanine 17 each coordinate Mg(2+). The active-site Schiff-base intermediate with substrate is the lysine 56. Aspartate 189 lines the Mg(2+) pocket.

The protein belongs to the HAD-like hydrolase superfamily. PhnX family. Homodimer. It depends on Mg(2+) as a cofactor.

The catalysed reaction is phosphonoacetaldehyde + H2O = acetaldehyde + phosphate + H(+). Involved in phosphonate degradation. The polypeptide is Phosphonoacetaldehyde hydrolase (Pseudomonas putida (Arthrobacter siderocapsulatus)).